Reading from the N-terminus, the 655-residue chain is Archaeal Lon protease (655 aa).

Topologically, residues 1–123 (MEENIESVEE…KAEREKRDRS (123 aa)) are cytoplasmic. 57-64 (GEPGTGKS) lines the ATP pocket. Residues 124 to 144 (RSIMFVIFSVVLLGIIAAIVL) form a helical membrane-spanning segment. Position 145 (Arg-145) is a topological domain, extracellular. A helical membrane pass occupies residues 146–166 (SITLIFFAIMAAAFLYMAMAF). Residues 167-655 (NPVIRNEKAM…ASTRAGQNVA (489 aa)) are Cytoplasmic-facing. In terms of domain architecture, Lon proteolytic spans 433–618 (GSVVGMVNGL…EDVLKVALVN (186 aa)). Catalysis depends on residues Ser-525 and Lys-568.

Belongs to the peptidase S16 family. Archaeal LonB subfamily. In terms of assembly, homohexamer. Organized in a ring with a central cavity.

It localises to the cell membrane. In terms of biological role, ATP-dependent serine protease that mediates the selective degradation of mutant and abnormal proteins as well as certain short-lived regulatory proteins. Degrades polypeptides processively. The polypeptide is Archaeal Lon protease (Thermoplasma volcanium (strain ATCC 51530 / DSM 4299 / JCM 9571 / NBRC 15438 / GSS1)).